The primary structure comprises 441 residues: Hydroxycinnamoyl-CoA:5-hydroxyanthranilate N-hydroxycinnamoyltransferase HHT1 (441 aa).

Active-site proton acceptor residues include His158 and Asp388.

Belongs to the plant acyltransferase family.

The catalysed reaction is 5-hydroxyanthranilate + (E)-4-coumaroyl-CoA = avenanthramide A + CoA. It carries out the reaction 5-hydroxyanthranilate + (E)-caffeoyl-CoA = avenanthramide C + CoA. Functionally, involved in the biosynthesis of avenanthramide phytoalexins, which are phenolic alkaloids found mainly in oats. Catalyzes the N-acylation of 5-hydroxyanthranilate with 4-coumaroyl-CoA or caffeoyl-CoA as acyl donors, forming avenanthramide A and avenanthramide C, respectively. Does not accept feruloyl-CoA as a substrate. In Avena sativa (Oat), this protein is Hydroxycinnamoyl-CoA:5-hydroxyanthranilate N-hydroxycinnamoyltransferase HHT1.